The following is a 476-amino-acid chain: Aspartyl/glutamyl-tRNA(Asn/Gln) amidotransferase subunit B (476 aa).

Belongs to the GatB/GatE family. GatB subfamily. As to quaternary structure, heterotrimer of A, B and C subunits.

It catalyses the reaction L-glutamyl-tRNA(Gln) + L-glutamine + ATP + H2O = L-glutaminyl-tRNA(Gln) + L-glutamate + ADP + phosphate + H(+). It carries out the reaction L-aspartyl-tRNA(Asn) + L-glutamine + ATP + H2O = L-asparaginyl-tRNA(Asn) + L-glutamate + ADP + phosphate + 2 H(+). Allows the formation of correctly charged Asn-tRNA(Asn) or Gln-tRNA(Gln) through the transamidation of misacylated Asp-tRNA(Asn) or Glu-tRNA(Gln) in organisms which lack either or both of asparaginyl-tRNA or glutaminyl-tRNA synthetases. The reaction takes place in the presence of glutamine and ATP through an activated phospho-Asp-tRNA(Asn) or phospho-Glu-tRNA(Gln). This Bacillus licheniformis (strain ATCC 14580 / DSM 13 / JCM 2505 / CCUG 7422 / NBRC 12200 / NCIMB 9375 / NCTC 10341 / NRRL NRS-1264 / Gibson 46) protein is Aspartyl/glutamyl-tRNA(Asn/Gln) amidotransferase subunit B.